The primary structure comprises 74 residues: Small integral membrane protein 15 (74 aa).

A helical membrane pass occupies residues 20–40 (YGFLTTVILALTPLFLASAVL). Residues 42–74 (WKLAKMIEAREKEQKKKQKRQENIAKAKRLKKD) adopt a coiled-coil conformation. Residues 55–66 (QKKKQKRQENIA) are compositionally biased toward basic and acidic residues. The interval 55-74 (QKKKQKRQENIAKAKRLKKD) is disordered.

The protein belongs to the SMIM15 family.

The protein resides in the membrane. In Homo sapiens (Human), this protein is Small integral membrane protein 15 (SMIM15).